The following is a 422-amino-acid chain: Enolase (422 aa).

Q161 is a binding site for (2R)-2-phosphoglycerate. The active-site Proton donor is the E203. D240, E283, and D310 together coordinate Mg(2+). Positions 335, 364, 365, and 386 each coordinate (2R)-2-phosphoglycerate. The Proton acceptor role is filled by K335.

It belongs to the enolase family. Requires Mg(2+) as cofactor.

It is found in the cytoplasm. Its subcellular location is the secreted. It localises to the cell surface. The enzyme catalyses (2R)-2-phosphoglycerate = phosphoenolpyruvate + H2O. The protein operates within carbohydrate degradation; glycolysis; pyruvate from D-glyceraldehyde 3-phosphate: step 4/5. Catalyzes the reversible conversion of 2-phosphoglycerate (2-PG) into phosphoenolpyruvate (PEP). It is essential for the degradation of carbohydrates via glycolysis. The sequence is that of Enolase from Deinococcus deserti (strain DSM 17065 / CIP 109153 / LMG 22923 / VCD115).